Reading from the N-terminus, the 544-residue chain is Probable acyl-activating enzyme 8 (544 aa).

This sequence belongs to the ATP-dependent AMP-binding enzyme family. As to expression, expressed at low levels in roots, leaves, stems, flowers and developing seeds.

Its function is as follows. May act as an acid--thiol ligase that activates carboxylic acids by forming acyl-CoAs. In Arabidopsis thaliana (Mouse-ear cress), this protein is Probable acyl-activating enzyme 8 (AAE8).